The chain runs to 640 residues: Fructose-1,6-bisphosphatase class 3 (640 aa).

It belongs to the FBPase class 3 family. Requires Mn(2+) as cofactor.

It carries out the reaction beta-D-fructose 1,6-bisphosphate + H2O = beta-D-fructose 6-phosphate + phosphate. It participates in carbohydrate biosynthesis; gluconeogenesis. In Lactococcus lactis subsp. lactis (strain IL1403) (Streptococcus lactis), this protein is Fructose-1,6-bisphosphatase class 3.